The following is a 417-amino-acid chain: Phosphoglycerate kinase (417 aa).

Residues Val23, Asp24, Phe25, Asn26, Gln38, Arg39, Ser62, His63, Gly65, Arg66, Leu122, Arg123, His170, and Arg171 each contribute to the (2R)-3-phosphoglycerate site. An ADP-binding site is contributed by Gly214. Gly214 serves as a coordination point for CDP. Ala215 and Lys216 together coordinate AMP. ATP is bound at residue Ala215. Mg(2+) is bound at residue Ala215. Asp219 lines the CDP pocket. Residue Asp219 coordinates Mg(2+). Lys220 serves as a coordination point for AMP. Lys220 contributes to the ATP binding site. An ADP-binding site is contributed by Gly238. A CDP-binding site is contributed by Gly238. Residues Gly239 and Gly313 each coordinate AMP. The ATP site is built by Gly239 and Gly313. Residues Gly338, Val340, and Phe343 each contribute to the CDP site. Phe343 contributes to the ADP binding site. Glu344 is a binding site for AMP. ATP contacts are provided by Glu344, Asp375, and Thr376. Residue Asp375 participates in Mg(2+) binding.

Belongs to the phosphoglycerate kinase family. As to quaternary structure, monomer. Mg(2+) serves as cofactor.

It localises to the cytoplasm. It carries out the reaction (2R)-3-phosphoglycerate + ATP = (2R)-3-phospho-glyceroyl phosphate + ADP. Its pathway is carbohydrate degradation; glycolysis; pyruvate from D-glyceraldehyde 3-phosphate: step 2/5. Functionally, catalyzes one of the two ATP producing reactions in the glycolytic pathway via the reversible conversion of 1,3-diphosphoglycerate to 3-phosphoglycerate. In addition to its role as a glycolytic enzyme, it seems that PGK-1 acts as a polymerase alpha cofactor protein (primer recognition protein). May play a role in sperm motility. The chain is Phosphoglycerate kinase (PGK) from Gallus gallus (Chicken).